We begin with the raw amino-acid sequence, 295 residues long: uncharacterized protein (295 aa).

An N-terminal signal peptide occupies residues 1–19 (MRKLLLIITVFFTFNVAQA).

This is an uncharacterized protein from Rickettsia conorii (strain ATCC VR-613 / Malish 7).